A 301-amino-acid polypeptide reads, in one-letter code: HTH-type transcriptional regulator MtrA (301 aa).

The 102-residue stretch at 196–297 folds into the HTH araC/xylS-type domain; sequence KRLGHLIQKV…HVSPGQYRKE (102 aa). DNA-binding regions (H-T-H motif) lie at residues 216–237 and 264–287; these read DKMV…KSQV and VLEV…KRQY.

Its activity is regulated as follows. The affinity for the mtrCDE promoter increases 2-fold in the presence of TX-100, a known effector and substrate of the MtrCDE pump. Functionally, involved in the induction of the mtrCDE-encoded efflux pump. Binds specifically to the mtrCDE promoter region. Required for high-level inducible resistance to the detergent Triton X-100 (TX-100) and the spermicide nonoxynol-9 (N-9). The protein is HTH-type transcriptional regulator MtrA of Neisseria gonorrhoeae.